The chain runs to 1114 residues: Filamentous growth regulator 23 (1114 aa).

An N-terminal signal peptide occupies residues 1–21 (MFASYLLLVLWIIRLVPTTHA). Disordered regions lie at residues 232-256 (GSET…PSTT) and 284-314 (SSSI…TSSS). The span at 240-252 (TTAPKPVETPSPE) shows a compositional bias: pro residues. N-linked (GlcNAc...) asparagine glycans are attached at residues Asn382, Asn397, Asn475, Asn490, Asn506, Asn539, Asn565, Asn591, Asn637, Asn687, and Asn739. Residues 392-430 (SETTTNESSSYTDEPSSSEEITNTYEPSSSTESSTTDQF) are disordered. Residues 764–784 (TSTLTSSHTSDNEKPASLSSS) form a disordered region. The N-linked (GlcNAc...) asparagine glycan is linked to Asn831. 2 stretches are compositionally biased toward low complexity: residues 844–910 (SASS…SSSS) and 922–941 (SSSV…ESSS). The disordered stretch occupies residues 844–963 (SASSSYHSSE…ANENTSEITT (120 aa)). Polar residues predominate over residues 942–963 (NGLVSTVTESSTANENTSEITT). Residues Asn957, Asn966, and Asn1070 are each glycosylated (N-linked (GlcNAc...) asparagine). Asn1089 is lipidated: GPI-anchor amidated asparagine. A propeptide spans 1090-1114 (ANSLGLKNGDNSWIIGIMMIGLLMI) (removed in mature form).

Its subcellular location is the cell membrane. Its function is as follows. Putative adhesin which may be involved in cell adhesion and virulence. Involved in the regulation of filamentous growth. This Candida albicans (strain SC5314 / ATCC MYA-2876) (Yeast) protein is Filamentous growth regulator 23 (FGR23).